Here is a 252-residue protein sequence, read N- to C-terminus: MLAKRIIPCLDTIGKKVVKGTSFINVRVVGDAKELARRYEKEGADEIVLLDITASEEGRSTFVDVVTDVASELFVPLTVGGGIKNIEDVRRLLKAGADKVSINTSAVENPDLINQIASEFGSQCLVVAIDVKRRGKKSWEVYIKGGKVPTGIDFKDWVIEVEKRGAGEILLTSIDADGHLSGYDYELLEYALSYSNLPLIASGGAGSLEDLYKALKIGVDAVLAASIFHFGTYSIPEVKRYLREKGIWVRLD.

Active-site residues include D11 and D130.

It belongs to the HisA/HisF family. Heterodimer of HisH and HisF.

It is found in the cytoplasm. It carries out the reaction 5-[(5-phospho-1-deoxy-D-ribulos-1-ylimino)methylamino]-1-(5-phospho-beta-D-ribosyl)imidazole-4-carboxamide + L-glutamine = D-erythro-1-(imidazol-4-yl)glycerol 3-phosphate + 5-amino-1-(5-phospho-beta-D-ribosyl)imidazole-4-carboxamide + L-glutamate + H(+). It functions in the pathway amino-acid biosynthesis; L-histidine biosynthesis; L-histidine from 5-phospho-alpha-D-ribose 1-diphosphate: step 5/9. Functionally, IGPS catalyzes the conversion of PRFAR and glutamine to IGP, AICAR and glutamate. The HisF subunit catalyzes the cyclization activity that produces IGP and AICAR from PRFAR using the ammonia provided by the HisH subunit. This chain is Imidazole glycerol phosphate synthase subunit HisF, found in Dictyoglomus turgidum (strain DSM 6724 / Z-1310).